The sequence spans 151 residues: Calmodulin (151 aa).

EF-hand domains follow at residues E10–N45, P46–D81, D83–K118, and L119–K151. Positions 23, 25, 27, 29, 34, 59, 61, 63, 65, 70, 96, 98, 100, 107, 132, 134, 136, and 143 each coordinate Ca(2+).

Belongs to the calmodulin family.

In terms of biological role, calmodulin mediates the control of a large number of enzymes, ion channels and other proteins by Ca(2+). Among the enzymes to be stimulated by the calmodulin-Ca(2+) complex are a number of protein kinases and phosphatases. The chain is Calmodulin from Pneumocystis carinii.